We begin with the raw amino-acid sequence, 293 residues long: 3-methyl-2-oxobutanoate hydroxymethyltransferase (293 aa).

Positions 1-29 are disordered; it reads MTAAHDRSENQPGRPGGETTAPYGSAPRR. Mg(2+) is bound by residues Asp73 and Asp112. Residues 73–74, Asp112, and Lys142 each bind 3-methyl-2-oxobutanoate; that span reads DS. Glu144 contacts Mg(2+). Catalysis depends on Glu210, which acts as the Proton acceptor.

Belongs to the PanB family. As to quaternary structure, homodecamer; pentamer of dimers. It depends on Mg(2+) as a cofactor.

The protein localises to the cytoplasm. It catalyses the reaction 3-methyl-2-oxobutanoate + (6R)-5,10-methylene-5,6,7,8-tetrahydrofolate + H2O = 2-dehydropantoate + (6S)-5,6,7,8-tetrahydrofolate. Its pathway is cofactor biosynthesis; (R)-pantothenate biosynthesis; (R)-pantoate from 3-methyl-2-oxobutanoate: step 1/2. Catalyzes the reversible reaction in which hydroxymethyl group from 5,10-methylenetetrahydrofolate is transferred onto alpha-ketoisovalerate to form ketopantoate. This Saccharopolyspora erythraea (strain ATCC 11635 / DSM 40517 / JCM 4748 / NBRC 13426 / NCIMB 8594 / NRRL 2338) protein is 3-methyl-2-oxobutanoate hydroxymethyltransferase.